The following is a 1308-amino-acid chain: Receptor tyrosine-protein kinase erbB-4 (1308 aa).

An N-terminal signal peptide occupies residues 1-25; the sequence is MKPATGLWVWVSLLVAAGTVQPSDS. Topologically, residues 26 to 651 are extracellular; sequence QSVCAGTENK…STLPQHARTP (626 aa). Cys29 and Cys56 are oxidised to a cystine. N-linked (GlcNAc...) asparagine glycosylation is found at Asn138, Asn174, and Asn181. 12 cysteine pairs are disulfide-bonded: Cys156/Cys186, Cys189/Cys197, Cys193/Cys205, Cys213/Cys221, Cys217/Cys229, Cys230/Cys238, Cys234/Cys246, Cys249/Cys258, Cys262/Cys289, Cys293/Cys304, Cys308/Cys323, and Cys326/Cys330. An N-linked (GlcNAc...) asparagine glycan is attached at Asn253. N-linked (GlcNAc...) asparagine glycans are attached at residues Asn358, Asn410, Asn473, and Asn495. 10 cysteine pairs are disulfide-bonded: Cys503–Cys512, Cys507–Cys520, Cys523–Cys532, Cys536–Cys552, Cys555–Cys569, Cys559–Cys577, Cys580–Cys589, Cys593–Cys614, Cys617–Cys625, and Cys621–Cys633. Asn548 is a glycosylation site (N-linked (GlcNAc...) asparagine). Residue Asn576 is glycosylated (N-linked (GlcNAc...) asparagine). A glycan (N-linked (GlcNAc...) asparagine) is linked at Asn620. A helical membrane pass occupies residues 652-675; it reads LIAAGVIGGLFILVIVGLTFAVYV. The Nuclear localization signal motif lies at 676-684; the sequence is RRKSIKKKR. The Cytoplasmic segment spans residues 676–1308; the sequence is RRKSIKKKRA…PPYRHRNTVV (633 aa). Residues 718–985 form the Protein kinase domain; it reads LKRVKVLGSG…RMARDPQRYL (268 aa). ATP-binding positions include 724-732, Lys751, 797-799, and 843-848; these read LGSGAFGTV, QLM, and DLAARN. Asp843 acts as the Proton acceptor in catalysis. Tyr875, Tyr1035, Tyr1056, Tyr1150, Tyr1162, Tyr1188, Tyr1202, Tyr1242, Tyr1258, and Tyr1284 each carry phosphotyrosine; by autocatalysis. Short sequence motifs (PPxY motif) lie at residues 1032 to 1035 and 1053 to 1056; these read PPIY and PPAY. The segment at 1117–1150 is disordered; that stretch reads PHVQEDSSTQRYSADPTVFAPERSPRGELDEEGY. The short motif at 1298-1301 is the PPxY motif 3 element; it reads PPPY. The short motif at 1306-1308 is the PDZ-binding element; that stretch reads TVV.

This sequence belongs to the protein kinase superfamily. Tyr protein kinase family. EGF receptor subfamily. As to quaternary structure, monomer in the absence of bound ligand. Homodimer or heterodimer with another ERBB family member upon ligand binding, thus forming heterotetramers. Interacts with EGFR and ERBB2. Interacts with CBFA2T3. Interacts with DLG2 (via its PDZ domain), DLG3 (via its PDZ domain), DLG4 (via its PDZ domain) and SNTB2 (via its PDZ domain). Interacts with MUC1. Interacts (via its PPxy motifs) with WWOX. Interacts (via the PPxY motif 3 of isoform JM-A CYT-2) with YAP1 (via the WW domain 1 of isoform 1). Interacts (isoform JM-A CYT-1 and isoform JM-B CYT-1) with WWP1. Interacts (via its intracellular domain) with TRIM28. Interacts (via the intracellular domains of both CYT-1 and CYT-2 isoforms) with KAP1; the interaction does not phosphorylate KAP1 but represses ERBB4-mediated transcriptional activity. Interacts with PRPU, DDX23, MATR3, RBM15, ILF3, KAP1, U5S1, U2SURP, ITCH, HNRNPU, AP2A1, NULC, LEO1, WWP2, IGHG1, HXK1, GRB7 and SRRT. Interacts (phosphorylated isoform JM-A CYT-1 and isoform JM-B CYT-1) with PIK3R1. Interacts with SHC1. Interacts with GRB2. Interacts (soluble intracellular domain) with STAT5A. Interacts (soluble intracellular domain) with BCL2. Interacts (phosphorylated) with STAT1. In terms of processing, isoform JM-A CYT-1 and isoform JM-A CYT-2 are processed by ADAM17. Proteolytic processing in response to ligand or 12-O-tetradecanoylphorbol-13-acetate stimulation results in the production of 120 kDa soluble receptor forms and intermediate membrane-anchored 80 kDa fragments (m80HER4), which are further processed by a presenilin-dependent gamma-secretase to release a cytoplasmic intracellular domain (E4ICD; E4ICD1/s80Cyt1 or E4ICD2/s80Cyt2, depending on the isoform). Membrane-anchored 80 kDa fragments of the processed isoform JM-A CYT-1 are more readily degraded by the proteasome than fragments of isoform JM-A CYT-2, suggesting a prevalence of E4ICD2 over E4ICD1. Isoform JM-B CYT-1 and isoform JM-B CYT-2 lack the ADAM17 cleavage site and are not processed by ADAM17, precluding further processing by gamma-secretase. Autophosphorylated on tyrosine residues in response to ligand binding. Autophosphorylation occurs in trans, i.e. one subunit of the dimeric receptor phosphorylates tyrosine residues on the other subunit. Ligands trigger phosphorylation at specific tyrosine residues, thereby creating binding sites for scaffold proteins and effectors. Constitutively phosphorylated at a basal level when overexpressed in heterologous systems; ligand binding leads to increased phosphorylation. Phosphorylation at Tyr-1035 is important for interaction with STAT1. Phosphorylation at Tyr-1056 is important for interaction with PIK3R1. Phosphorylation at Tyr-1242 is important for interaction with SHC1. Phosphorylation at Tyr-1188 may also contribute to the interaction with SHC1. Isoform JM-A CYT-2 is constitutively phosphorylated on tyrosine residues in a ligand-independent manner. E4ICD2 but not E4ICD1 is phosphorylated on tyrosine residues. Post-translationally, ubiquitinated. During mitosis, the ERBB4 intracellular domain is ubiquitinated by the APC/C complex and targeted to proteasomal degradation. Isoform JM-A CYT-1 and isoform JM-B CYT-1 are ubiquitinated by WWP1. The ERBB4 intracellular domain (E4ICD1) is ubiquitinated, and this involves NEDD4. As to expression, expressed at highest levels in brain, heart, kidney, in addition to skeletal muscle, parathyroid, cerebellum, pituitary, spleen, testis and breast. Lower levels in thymus, lung, salivary gland, and pancreas. Isoform JM-A CYT-1 and isoform JM-B CYT-1 are expressed in cerebellum, but only the isoform JM-B is expressed in the heart.

It is found in the cell membrane. Its subcellular location is the nucleus. It localises to the mitochondrion. The catalysed reaction is L-tyrosyl-[protein] + ATP = O-phospho-L-tyrosyl-[protein] + ADP + H(+). With respect to regulation, binding of a cognate ligand leads to dimerization and activation by autophosphorylation on tyrosine residues. In vitro kinase activity is increased by Mg(2+). Inhibited by PD153035, lapatinib, gefitinib (iressa, ZD1839), AG1478 and BIBX1382BS. Tyrosine-protein kinase that plays an essential role as cell surface receptor for neuregulins and EGF family members and regulates development of the heart, the central nervous system and the mammary gland, gene transcription, cell proliferation, differentiation, migration and apoptosis. Required for normal cardiac muscle differentiation during embryonic development, and for postnatal cardiomyocyte proliferation. Required for normal development of the embryonic central nervous system, especially for normal neural crest cell migration and normal axon guidance. Required for mammary gland differentiation, induction of milk proteins and lactation. Acts as cell-surface receptor for the neuregulins NRG1, NRG2, NRG3 and NRG4 and the EGF family members BTC, EREG and HBEGF. Ligand binding triggers receptor dimerization and autophosphorylation at specific tyrosine residues that then serve as binding sites for scaffold proteins and effectors. Ligand specificity and signaling is modulated by alternative splicing, proteolytic processing, and by the formation of heterodimers with other ERBB family members, thereby creating multiple combinations of intracellular phosphotyrosines that trigger ligand- and context-specific cellular responses. Mediates phosphorylation of SHC1 and activation of the MAP kinases MAPK1/ERK2 and MAPK3/ERK1. Isoform JM-A CYT-1 and isoform JM-B CYT-1 phosphorylate PIK3R1, leading to the activation of phosphatidylinositol 3-kinase and AKT1 and protect cells against apoptosis. Isoform JM-A CYT-1 and isoform JM-B CYT-1 mediate reorganization of the actin cytoskeleton and promote cell migration in response to NRG1. Isoform JM-A CYT-2 and isoform JM-B CYT-2 lack the phosphotyrosine that mediates interaction with PIK3R1, and hence do not phosphorylate PIK3R1, do not protect cells against apoptosis, and do not promote reorganization of the actin cytoskeleton and cell migration. Proteolytic processing of isoform JM-A CYT-1 and isoform JM-A CYT-2 gives rise to the corresponding soluble intracellular domains (4ICD) that translocate to the nucleus, promote nuclear import of STAT5A, activation of STAT5A, mammary epithelium differentiation, cell proliferation and activation of gene expression. The ERBB4 soluble intracellular domains (4ICD) colocalize with STAT5A at the CSN2 promoter to regulate transcription of milk proteins during lactation. The ERBB4 soluble intracellular domains can also translocate to mitochondria and promote apoptosis. The sequence is that of Receptor tyrosine-protein kinase erbB-4 (ERBB4) from Homo sapiens (Human).